The chain runs to 439 residues: UPF0489 protein C5orf22 homolog (439 aa).

The disordered stretch occupies residues 163-219; sequence TTKLENGQSGAKIPKAAQTQDDMQSKADTPCTSSSQPPDGSAASGNISETAKKKADD. Over residues 179–211 the composition is skewed to polar residues; sequence AQTQDDMQSKADTPCTSSSQPPDGSAASGNISE.

Belongs to the UPF0489 family.

The polypeptide is UPF0489 protein C5orf22 homolog (Danio rerio (Zebrafish)).